The sequence spans 392 residues: L-rhamnonate dehydratase (392 aa).

Substrate is bound by residues H22 and R48. Mg(2+)-binding residues include D214, E240, and E268. The Proton acceptor role is filled by H318. E338 is a binding site for substrate.

Belongs to the mandelate racemase/muconate lactonizing enzyme family. RhamD subfamily. In terms of assembly, homooctamer; tetramer of dimers. Requires Mg(2+) as cofactor.

The enzyme catalyses L-rhamnonate = 2-dehydro-3-deoxy-L-rhamnonate + H2O. Functionally, catalyzes the dehydration of L-rhamnonate to 2-keto-3-deoxy-L-rhamnonate (KDR). This is L-rhamnonate dehydratase from Paraburkholderia xenovorans (strain LB400).